We begin with the raw amino-acid sequence, 408 residues long: tRNA-specific 2-thiouridylase MnmA (408 aa).

Residues 27 to 34 (AMSGGVDS) and Leu53 each bind ATP. Cys121 acts as the Nucleophile in catalysis. A disulfide bridge connects residues Cys121 and Cys222. ATP is bound at residue Gly145. An interaction with tRNA region spans residues 172 to 174 (RDQ). Residue Cys222 is the Cysteine persulfide intermediate of the active site.

The protein belongs to the MnmA/TRMU family.

The protein localises to the cytoplasm. The catalysed reaction is S-sulfanyl-L-cysteinyl-[protein] + uridine(34) in tRNA + AH2 + ATP = 2-thiouridine(34) in tRNA + L-cysteinyl-[protein] + A + AMP + diphosphate + H(+). Its function is as follows. Catalyzes the 2-thiolation of uridine at the wobble position (U34) of tRNA, leading to the formation of s(2)U34. This chain is tRNA-specific 2-thiouridylase MnmA, found in Rhizobium johnstonii (strain DSM 114642 / LMG 32736 / 3841) (Rhizobium leguminosarum bv. viciae).